The primary structure comprises 553 residues: Protein PNS1 (553 aa).

Over residues 1 to 17 (MYGKSGPPPEGYVPQHP) the composition is skewed to pro residues. Positions 1-49 (MYGKSGPPPEGYVPQHPPAQGYAPHNPPPGYVHENPFQEPVPQGQEYSP) are disordered. Over 1 to 95 (MYGKSGPPPE…AGNRLKFNDW (95 aa)) the chain is Cytoplasmic. A helical transmembrane segment spans residues 96–116 (PFTIIFLLTVGAFIAVAVLTL). Topologically, residues 117-143 (RGWSLSPTSNGSGIYDGDNTHTLNTNA) are extracellular. Asn126 is a glycosylation site (N-linked (GlcNAc...) asparagine). The chain crosses the membrane as a helical span at residues 144-164 (AILLLISCGVAVALSVFGLVL). At 165-170 (AGMYTK) the chain is on the cytoplasmic side. The helical transmembrane segment at 171-191 (FFIYAAMILNTVVGLGTAITY) threads the bilayer. The Extracellular portion of the chain corresponds to 192 to 196 (LVLRH). The helical transmembrane segment at 197 to 217 (WSAGIVFMIFTILTAVCYWLM) threads the bilayer. The Cytoplasmic segment spans residues 218-243 (RSRIPFSVAVLRTVMSVMKKHPQTWL). Residues 244–264 (VSLLGTIVSAAFSVIFSVVLV) form a helical membrane-spanning segment. Over 265–288 (ATYIKYDPKSENGGCDVSGGSCSR) the chain is Extracellular. The helical transmembrane segment at 289–309 (GKLIGILVLVFFCGFYISEVI) threads the bilayer. The Cytoplasmic segment spans residues 310–346 (RNVIHCTIAGIYGCWYYFSKSDQGMPRWPAFGSLKRA). A helical transmembrane segment spans residues 347–367 (LTTSFGSICFGSLIVSLIQLL). Residues 368–385 (RQIIQLLRNGIISGISDS) lie on the Extracellular side of the membrane. A helical membrane pass occupies residues 386–406 (GWMQCLWLILDAVVGVFEWMA). The Cytoplasmic portion of the chain corresponds to 407–450 (EYFNHYAYCFIALYGKPYLRAAKETWHMLREKGIDALINDNLIN). The helical transmembrane segment at 451–471 (LALGFYTLFVGYTTALFSYLF) threads the bilayer. Residues 472–483 (LRFTKPDYNSGG) are Extracellular-facing. A helical membrane pass occupies residues 484–504 (GFNAVLMAFSFLIAIQLTHVA). The Cytoplasmic portion of the chain corresponds to 505–553 (TETIRSGTATFFVALGNDPEIFRVSYPQRFDEIFRAYPDVLNKLSHQHV).

The protein belongs to the CTL (choline transporter-like) family.

Its subcellular location is the cell membrane. Probably involved in transport through the plasma membrane. The polypeptide is Protein PNS1 (PNS1) (Eremothecium gossypii (strain ATCC 10895 / CBS 109.51 / FGSC 9923 / NRRL Y-1056) (Yeast)).